A 130-amino-acid polypeptide reads, in one-letter code: Small ribosomal subunit protein uS9 (130 aa).

It belongs to the universal ribosomal protein uS9 family.

The protein is Small ribosomal subunit protein uS9 of Photorhabdus laumondii subsp. laumondii (strain DSM 15139 / CIP 105565 / TT01) (Photorhabdus luminescens subsp. laumondii).